Reading from the N-terminus, the 332-residue chain is Holliday junction branch migration complex subunit RuvB (332 aa).

Residues 1-181 (MTRFLDSDAM…FGITGHMEYY (181 aa)) are large ATPase domain (RuvB-L). Residues leucine 20, arginine 21, glycine 62, lysine 65, threonine 66, threonine 67, 128–130 (EDF), arginine 171, tyrosine 181, and arginine 218 each bind ATP. Residue threonine 66 participates in Mg(2+) binding. Residues 182-252 (EENDLTEIIE…ITDKALTMLD (71 aa)) form a small ATPAse domain (RuvB-S) region. The tract at residues 255-332 (HEGLDYVDQK…EHLGYQRFDK (78 aa)) is head domain (RuvB-H). The DNA site is built by arginine 291, arginine 310, arginine 312, and arginine 315.

Belongs to the RuvB family. In terms of assembly, homohexamer. Forms an RuvA(8)-RuvB(12)-Holliday junction (HJ) complex. HJ DNA is sandwiched between 2 RuvA tetramers; dsDNA enters through RuvA and exits via RuvB. An RuvB hexamer assembles on each DNA strand where it exits the tetramer. Each RuvB hexamer is contacted by two RuvA subunits (via domain III) on 2 adjacent RuvB subunits; this complex drives branch migration. In the full resolvosome a probable DNA-RuvA(4)-RuvB(12)-RuvC(2) complex forms which resolves the HJ.

The protein localises to the cytoplasm. It catalyses the reaction ATP + H2O = ADP + phosphate + H(+). Its function is as follows. The RuvA-RuvB-RuvC complex processes Holliday junction (HJ) DNA during genetic recombination and DNA repair, while the RuvA-RuvB complex plays an important role in the rescue of blocked DNA replication forks via replication fork reversal (RFR). RuvA specifically binds to HJ cruciform DNA, conferring on it an open structure. The RuvB hexamer acts as an ATP-dependent pump, pulling dsDNA into and through the RuvAB complex. RuvB forms 2 homohexamers on either side of HJ DNA bound by 1 or 2 RuvA tetramers; 4 subunits per hexamer contact DNA at a time. Coordinated motions by a converter formed by DNA-disengaged RuvB subunits stimulates ATP hydrolysis and nucleotide exchange. Immobilization of the converter enables RuvB to convert the ATP-contained energy into a lever motion, pulling 2 nucleotides of DNA out of the RuvA tetramer per ATP hydrolyzed, thus driving DNA branch migration. The RuvB motors rotate together with the DNA substrate, which together with the progressing nucleotide cycle form the mechanistic basis for DNA recombination by continuous HJ branch migration. Branch migration allows RuvC to scan DNA until it finds its consensus sequence, where it cleaves and resolves cruciform DNA. This is Holliday junction branch migration complex subunit RuvB from Streptococcus agalactiae serotype Ia (strain ATCC 27591 / A909 / CDC SS700).